The primary structure comprises 105 residues: Prokineticin-1 (105 aa).

The signal sequence occupies residues 1-19 (MRGAVQVFIMLLLATVSDC). Intrachain disulfides connect C26/C38, C32/C50, C37/C78, C60/C86, and C80/C96.

Belongs to the AVIT (prokineticin) family.

It localises to the secreted. Potently contracts gastrointestinal (GI) smooth muscle. Induces proliferation, migration and fenestration (the formation of membrane discontinuities) in capillary endothelial cells derived from endocrine glands. Has little or no effect on a variety of other endothelial and non-endothelial cell types. Induces proliferation and differentiation, but not migration, of enteric neural crest cells. Directly influences neuroblastoma progression by promoting the proliferation and migration of neuroblastoma cells. Positively regulates PTGS2 expression and prostaglandin synthesis. May play a role in placentation. May play a role in normal and pathological testis angiogenesis. This is Prokineticin-1 (Prok1) from Rattus norvegicus (Rat).